The chain runs to 403 residues: Acetyl-CoA acetyltransferase IA (403 aa).

Residue Cys-91 is the Acyl-thioester intermediate of the active site. Residues His-353 and Cys-383 each act as proton acceptor in the active site. The Microbody targeting signal signature appears at 401–403; that stretch reads AKL.

This sequence belongs to the thiolase-like superfamily. Thiolase family. In terms of assembly, multimeric.

The protein resides in the peroxisome. The enzyme catalyses 2 acetyl-CoA = acetoacetyl-CoA + CoA. It participates in metabolic intermediate biosynthesis; (R)-mevalonate biosynthesis; (R)-mevalonate from acetyl-CoA: step 1/3. This Candida tropicalis (Yeast) protein is Acetyl-CoA acetyltransferase IA (PACTA).